A 385-amino-acid polypeptide reads, in one-letter code: Serpin-Z1 (385 aa).

Positions 317-341 are RCL; that stretch reads GAEAAAATADGDCGCSLDFVEPPKK.

It belongs to the serpin family.

In terms of biological role, probable serine protease inhibitor. The sequence is that of Serpin-Z1 from Arabidopsis thaliana (Mouse-ear cress).